The following is a 37-amino-acid chain: Ferredoxin--NADP reductase, chloroplastic (37 aa).

NADP(+) is bound by residues serine 3 and 24–25 (SR).

This sequence belongs to the ferredoxin--NADP reductase type 1 family. FAD is required as a cofactor.

The protein resides in the plastid. It localises to the chloroplast stroma. The protein localises to the chloroplast thylakoid membrane. It catalyses the reaction 2 reduced [2Fe-2S]-[ferredoxin] + NADP(+) + H(+) = 2 oxidized [2Fe-2S]-[ferredoxin] + NADPH. The protein operates within energy metabolism; photosynthesis. May play a key role in regulating the relative amounts of cyclic and non-cyclic electron flow to meet the demands of the plant for ATP and reducing power. This Imperata cylindrica (Cogon grass) protein is Ferredoxin--NADP reductase, chloroplastic.